The primary structure comprises 298 residues: PYK10-binding protein 1 (298 aa).

Position 2 is an N-acetylalanine (alanine 2). Jacalin-type lectin domains lie at 2–142 (AQKV…YFAP) and 152–295 (AKQL…HVRP). The residue at position 20 (serine 20) is a Phosphoserine.

Belongs to the jacalin lectin family. As to quaternary structure, component of the PYK10 complex, at least composed of PYK10/BGLU23, BGLU21, BGLU22, JAL22, JAL23, PBP1/JAL30, PBP2/JAL31, JAL32, JAL33, JAL34, JAL35, GLL22 and GLL23. In terms of tissue distribution, expressed exclusively in roots.

Its subcellular location is the cytoplasm. In terms of biological role, inhibitor-type lectin that may regulate the correct polymerization of BGLU23/PYK10 upon tissue damage. Activates BGLU21, BGLU22 and BGLU23. The polypeptide is PYK10-binding protein 1 (PBP1) (Arabidopsis thaliana (Mouse-ear cress)).